A 326-amino-acid polypeptide reads, in one-letter code: Cathepsin L-like proteinase (326 aa).

The N-terminal stretch at 1–15 is a signal peptide; it reads MRLFILAVLTVGVLG. The propeptide at 16-106 is activation peptide; the sequence is SNDDLWHQWK…HGVPYEANNR (91 aa). 3-hydroxyproline; partial is present on Pro109. 3 disulfide bridges follow: Cys129–Cys172, Cys163–Cys204, and Cys262–Cys311. Residue Cys132 is part of the active site. Pro196 carries the 3-hydroxyproline; partial modification. Catalysis depends on residues His269 and Asn289.

It belongs to the peptidase C1 family. Monomer. Post-translationally, contains cysteine residues involved in intramolecular disulfide bonding.

It localises to the secreted. Its activity is regulated as follows. Strongly inhibited by Antipain, E64 and Leupeptin, and weakly inhibited by iodoacetic acid (IAA) and phenylmethylsulfonyl fluoride (PMSF). Requires the presence of dithiothreitol (DTT) for activity. Thiol protease. Probably involved in interaction with host tissues. Displays a similar activity to that of papain. Has high activity on Z-Phe-Arg-NHMec, but no activity on Z-Arg-NHMec. The protein is Cathepsin L-like proteinase of Fasciola hepatica (Liver fluke).